The following is a 313-amino-acid chain: Calcium homeostasis modulator protein 6 (313 aa).

Over 1 to 21 (MEKFKAVLDLQRKHRNALGYS) the chain is Cytoplasmic. The helical transmembrane segment at 22-37 (LVTLLTAGGEKIFSSV) threads the bilayer. At 38-46 (VFQCPCTAT) the chain is on the extracellular side. 3 disulfide bridges follow: C41–C125, C43–C154, and C138–C145. The helical transmembrane segment at 47-68 (WNLPYGLVFLLVPALALFLLGY) threads the bilayer. Topologically, residues 69-101 (ALSARTWRLLTGCCSRSARFSSGLRSAFVCAQL) are cytoplasmic. Residues 102–126 (SMTAAFAPLTWVAVALLEGSFYQCA) traverse the membrane as a helical segment. Over 127–167 (VSGSARLAPYLCKGRDPNCNATLPQAPCNKQKVEMQEILSQ) the chain is Extracellular. A helical membrane pass occupies residues 168-190 (LKAQSQVFGWILIAAVIILLLLV). Residues 191–313 (KSVTRCFSPV…DMSMTNTHEL (123 aa)) lie on the Cytoplasmic side of the membrane.

Belongs to the CALHM family. Oligomerizes to form decameric and undecameric channels. In terms of processing, N-glycosylated. Immune cells in primary and secondary lymphoid organs.

The protein localises to the cell membrane. The enzyme catalyses ATP(in) = ATP(out). Its activity is regulated as follows. Inhibited by Gd(3+). Partially inhibited by divalent ions Ca(2+) and Ba(2+). Functionally, pore-forming subunit of an ATP-permeable channel. In response to pathogen-derived and proinflammatory stimuli, relocates from intracellular compartments to NK-dendritic cell and NK-macrophage immune synapses where it mediates ATP efflux and NK cell activation involved in antimicrobial and antitumor responses. May assemble to form gap junction channel-like structures with gating and ion conductance likely regulated by membrane lipids and voltage rather than by extracellular calcium levels. This Mus musculus (Mouse) protein is Calcium homeostasis modulator protein 6.